A 206-amino-acid polypeptide reads, in one-letter code: MARYLGPKLKLSRREGTDLFLKSGVRAIDSKCKLETAPGQHGARKPRLSEYGTQLREKQKVRRIYGVLEKQFRNYYKDAARLKGNTGENLLQLLETRLDNVVYRMGFGATRAESRQLVSHKSVMVNGRVVNIPSFKVSANDVVSIREKSRTQARIKAALEVAAQREKPTWVEVDSAKMEGAFKRVPERSDLSAEINEQLIVELYSK.

The 61-residue stretch at 96–156 (TRLDNVVYRM…EKSRTQARIK (61 aa)) folds into the S4 RNA-binding domain.

It belongs to the universal ribosomal protein uS4 family. As to quaternary structure, part of the 30S ribosomal subunit. Contacts protein S5. The interaction surface between S4 and S5 is involved in control of translational fidelity.

One of the primary rRNA binding proteins, it binds directly to 16S rRNA where it nucleates assembly of the body of the 30S subunit. Its function is as follows. With S5 and S12 plays an important role in translational accuracy. In Shewanella putrefaciens (strain CN-32 / ATCC BAA-453), this protein is Small ribosomal subunit protein uS4.